Consider the following 677-residue polypeptide: Methionine--tRNA ligase (677 aa).

Positions Pro15–His25 match the 'HIGH' region motif. Cys146, Cys149, Cys159, and Cys162 together coordinate Zn(2+). The 'KMSKS' region signature appears at Lys333 to Ser337. Position 336 (Lys336) interacts with ATP. The tRNA-binding domain occupies Asp575 to Lys677.

Belongs to the class-I aminoacyl-tRNA synthetase family. MetG type 1 subfamily. As to quaternary structure, homodimer. Zn(2+) serves as cofactor.

It is found in the cytoplasm. It carries out the reaction tRNA(Met) + L-methionine + ATP = L-methionyl-tRNA(Met) + AMP + diphosphate. Functionally, is required not only for elongation of protein synthesis but also for the initiation of all mRNA translation through initiator tRNA(fMet) aminoacylation. The polypeptide is Methionine--tRNA ligase (Salmonella schwarzengrund (strain CVM19633)).